A 251-amino-acid chain; its full sequence is Triosephosphate isomerase (251 aa).

9 to 11 (NWK) is a substrate binding site. The Electrophile role is filled by H95. The Proton acceptor role is filled by E167. Residues G173, S213, and 234–235 (GG) contribute to the substrate site.

The protein belongs to the triosephosphate isomerase family. As to quaternary structure, homodimer.

The protein localises to the cytoplasm. The catalysed reaction is D-glyceraldehyde 3-phosphate = dihydroxyacetone phosphate. It functions in the pathway carbohydrate biosynthesis; gluconeogenesis. It participates in carbohydrate degradation; glycolysis; D-glyceraldehyde 3-phosphate from glycerone phosphate: step 1/1. Functionally, involved in the gluconeogenesis. Catalyzes stereospecifically the conversion of dihydroxyacetone phosphate (DHAP) to D-glyceraldehyde-3-phosphate (G3P). This chain is Triosephosphate isomerase, found in Geotalea uraniireducens (strain Rf4) (Geobacter uraniireducens).